The sequence spans 130 residues: Sec-independent protein translocase protein TatB (130 aa).

The chain crosses the membrane as a helical span at residues 1 to 21 (MFDIGFTELTLIFIIGLVVLG). Basic and acidic residues-rich tracts occupy residues 57-67 (QDMQERMEKQM) and 111-130 (PSDK…RRHD). Residues 57-130 (QDMQERMEKQ…NHDQDSRRHD (74 aa)) are disordered.

This sequence belongs to the TatB family. As to quaternary structure, the Tat system comprises two distinct complexes: a TatABC complex, containing multiple copies of TatA, TatB and TatC subunits, and a separate TatA complex, containing only TatA subunits. Substrates initially bind to the TatABC complex, which probably triggers association of the separate TatA complex to form the active translocon.

It is found in the cell inner membrane. Functionally, part of the twin-arginine translocation (Tat) system that transports large folded proteins containing a characteristic twin-arginine motif in their signal peptide across membranes. Together with TatC, TatB is part of a receptor directly interacting with Tat signal peptides. TatB may form an oligomeric binding site that transiently accommodates folded Tat precursor proteins before their translocation. The protein is Sec-independent protein translocase protein TatB of Alcanivorax borkumensis (strain ATCC 700651 / DSM 11573 / NCIMB 13689 / SK2).